The primary structure comprises 2531 residues: Probable polyketide synthase 26 (2531 aa).

Residues 10–433 enclose the Ketosynthase family 3 (KS3) domain; the sequence is QEDIAIIGFR…GSNCCLVLTE (424 aa). Residues Cys174, His316, and His356 each act as for beta-ketoacyl synthase activity in the active site. Residues 620 to 653 form an acyl/malonyl transferase region; sequence GINPSFIVGHSLGELPMAFCSGMIDFDTVCYLLY. Ser630 functions as the For acyl/malonyl transferase activity in the catalytic mechanism. The N-terminal hotdog fold stretch occupies residues 915-1036; that stretch reads MDTLGFSNEK…ANYHLSHRDD (122 aa). The PKS/mFAS DH domain occupies 915 to 1206; the sequence is MDTLGFSNEK…LKSLIPLKDP (292 aa). His948 functions as the Proton acceptor; for dehydratase activity in the catalytic mechanism. Positions 1055–1206 are C-terminal hotdog fold; sequence NLTKLSKNQF…LKSLIPLKDP (152 aa). Residue Asp1117 is the Proton donor; for dehydratase activity of the active site. The 79-residue stretch at 2431 to 2509 folds into the Carrier domain; the sequence is ASENPVKDLL…DNIKILTDSY (79 aa). Position 2468 is an O-(pantetheine 4'-phosphoryl)serine (Ser2468).

Pantetheine 4'-phosphate is required as a cofactor.

Functionally, probable polyketide synthase. The polypeptide is Probable polyketide synthase 26 (pks26) (Dictyostelium discoideum (Social amoeba)).